A 928-amino-acid chain; its full sequence is BCAS3 microtubule associated cell migration factor (928 aa).

N-acetylmethionine is present on methionine 1. Residues 69–114 (DLNDTSRNLEFHEIHSTGNEPPLLIMIGYSDGMQVWSIPISGEAQE) form a WD repeat. A Glycyl lysine isopeptide (Lys-Gly) (interchain with G-Cter in SUMO1); alternate cross-link involves residue lysine 215. Lysine 215 participates in a covalent cross-link: Glycyl lysine isopeptide (Lys-Gly) (interchain with G-Cter in SUMO2); alternate. Required for recruitment to preautophagosomal structure in response to mitophagy regions lie at residues 254–312 (RGGA…SRRS) and 437–560 (YGGQ…IKAP). Serine 461, serine 480, and serine 488 each carry phosphoserine. 2 disordered regions span residues 472 to 515 (TSKQ…PGNP) and 755 to 777 (TTVI…PQPL). Low complexity-rich tracts occupy residues 480–494 (SPVP…GSPL), 505–514 (NNFTNNNPGN), and 755–771 (TTVI…HGPS). Phosphoserine occurs at positions 838, 886, and 898. The disordered stretch occupies residues 868–928 (ESPSRDVVGS…PLSLFPTGFP (61 aa)). Residues 887–901 (IETLSNSSGSTSGSI) show a composition bias toward low complexity.

Belongs to the BCAS3 family. In terms of assembly, interacts with histone H3, ESR1, KAT2B and PELP1; the interactions occur in a estrogen-dependent manner. Interacts with beta-tubulin and VIM. Interacts (via C-terminal) with PHAF1; the interaction is requrired for the association with the phagophore. In terms of tissue distribution, expressed in stomach, liver, lung, kidney, prostate, testis, thyroid gland, adrenal gland, brain, heart, skeletal muscle, colon, spleen, small intestine, placenta, blood leukocyte and mammary epithelial cells. Expressed in undifferentiated ES cells. Expressed in blood islands and nascent blood vessels derived from differentiated ES cells into embryoid bodies (BD). Expressed in endothelial cells. Not detected in brain. Expressed in brain tumors (at protein level). Expressed in brain. Highly expressed in breast cancers and in glioma cell lines.

It is found in the nucleus. It localises to the cytoplasm. Its subcellular location is the cytoskeleton. The protein resides in the preautophagosomal structure. Plays a role in angiogenesis. Participates in the regulation of cell polarity and directional endothelial cell migration by mediating both the activation and recruitment of CDC42 and the reorganization of the actin cytoskeleton at the cell leading edge. Promotes filipodia formation. Functions synergistically with PELP1 as a transcriptional coactivator of estrogen receptor-responsive genes. Stimulates histone acetyltransferase activity. Binds to chromatin. Plays a regulatory role in autophagic activity. In complex with PHAF1, associates with the preautophagosomal structure during both non-selective and selective autophagy. Probably binds phosphatidylinositol 3-phosphate (PtdIns3P) which would mediate the recruitment preautophagosomal structures. The chain is BCAS3 microtubule associated cell migration factor from Homo sapiens (Human).